Here is an 85-residue protein sequence, read N- to C-terminus: Alpha-conotoxin Lt28.1 (85 aa).

A signal peptide spans 1–21 (MPKLEMMLLVLLILPLCYIDA). The propeptide occupies 22 to 40 (VGPPPPWNMEDEIIEHWQK). 4 disulfide bridges follow: Cys-61-Cys-74, Cys-66-Cys-84, Cys-67-Cys-79, and Cys-72-Cys-81.

It belongs to the conotoxin D superfamily. In terms of tissue distribution, expressed by the venom duct.

It is found in the secreted. Its function is as follows. Alpha-conotoxins act on postsynaptic membranes, they bind to the nicotinic acetylcholine receptors (nAChR) and thus inhibit them. This toxin weakly inhibits alpha-9-alpha-10/CHRNA9-CHRNA10 nAChRs (IC(50)=3 uM). This Conus litteratus (Lettered cone) protein is Alpha-conotoxin Lt28.1.